The chain runs to 374 residues: Heme A synthase (374 aa).

The next 8 helical transmembrane spans lie at 22 to 42 (VAVW…IGAI), 107 to 127 (LWGR…WVRG), 135 to 155 (PTLA…WFMV), 172 to 192 (LHLG…LGLL), 209 to 229 (AWAA…VAGI), 265 to 285 (AAVQ…VLSL), 306 to 326 (AAAT…VVWI), and 327 to 347 (PLAT…VWTL). His271 lines the heme pocket. His332 serves as a coordination point for heme.

It belongs to the COX15/CtaA family. Type 2 subfamily. As to quaternary structure, interacts with CtaB. The cofactor is heme b.

The protein localises to the cell membrane. It catalyses the reaction Fe(II)-heme o + 2 A + H2O = Fe(II)-heme a + 2 AH2. Its pathway is porphyrin-containing compound metabolism; heme A biosynthesis; heme A from heme O: step 1/1. In terms of biological role, catalyzes the conversion of heme O to heme A by two successive hydroxylations of the methyl group at C8. The first hydroxylation forms heme I, the second hydroxylation results in an unstable dihydroxymethyl group, which spontaneously dehydrates, resulting in the formyl group of heme A. In Rhodospirillum centenum (strain ATCC 51521 / SW), this protein is Heme A synthase.